The chain runs to 227 residues: Cytochrome c oxidase subunit 2 (227 aa).

Residues 1-14 (MAYPVQLGFQDAAS) lie on the Mitochondrial intermembrane side of the membrane. A helical transmembrane segment spans residues 15–45 (PIMEELLYFHDHTLMIMFLISSLVLYIISLM). At 46–59 (LTTELMHTNTMDAQ) the chain is on the mitochondrial matrix side. Residues 60-87 (EVETVWTILPAAILILIALPSLRILYMM) traverse the membrane as a helical segment. The Mitochondrial intermembrane portion of the chain corresponds to 88 to 227 (DEITTPSLTL…HFEEWLLSML (140 aa)). Residues His161, Cys196, Glu198, Cys200, His204, and Met207 each contribute to the Cu cation site. Glu198 is a binding site for Mg(2+).

It belongs to the cytochrome c oxidase subunit 2 family. Component of the cytochrome c oxidase (complex IV, CIV), a multisubunit enzyme composed of 14 subunits. The complex is composed of a catalytic core of 3 subunits MT-CO1, MT-CO2 and MT-CO3, encoded in the mitochondrial DNA, and 11 supernumerary subunits COX4I, COX5A, COX5B, COX6A, COX6B, COX6C, COX7A, COX7B, COX7C, COX8 and NDUFA4, which are encoded in the nuclear genome. The complex exists as a monomer or a dimer and forms supercomplexes (SCs) in the inner mitochondrial membrane with NADH-ubiquinone oxidoreductase (complex I, CI) and ubiquinol-cytochrome c oxidoreductase (cytochrome b-c1 complex, complex III, CIII), resulting in different assemblies (supercomplex SCI(1)III(2)IV(1) and megacomplex MCI(2)III(2)IV(2)). Found in a complex with TMEM177, COA6, COX18, COX20, SCO1 and SCO2. Interacts with TMEM177 in a COX20-dependent manner. Interacts with COX20. Interacts with COX16. Requires Cu cation as cofactor.

The protein resides in the mitochondrion inner membrane. It catalyses the reaction 4 Fe(II)-[cytochrome c] + O2 + 8 H(+)(in) = 4 Fe(III)-[cytochrome c] + 2 H2O + 4 H(+)(out). Component of the cytochrome c oxidase, the last enzyme in the mitochondrial electron transport chain which drives oxidative phosphorylation. The respiratory chain contains 3 multisubunit complexes succinate dehydrogenase (complex II, CII), ubiquinol-cytochrome c oxidoreductase (cytochrome b-c1 complex, complex III, CIII) and cytochrome c oxidase (complex IV, CIV), that cooperate to transfer electrons derived from NADH and succinate to molecular oxygen, creating an electrochemical gradient over the inner membrane that drives transmembrane transport and the ATP synthase. Cytochrome c oxidase is the component of the respiratory chain that catalyzes the reduction of oxygen to water. Electrons originating from reduced cytochrome c in the intermembrane space (IMS) are transferred via the dinuclear copper A center (CU(A)) of subunit 2 and heme A of subunit 1 to the active site in subunit 1, a binuclear center (BNC) formed by heme A3 and copper B (CU(B)). The BNC reduces molecular oxygen to 2 water molecules using 4 electrons from cytochrome c in the IMS and 4 protons from the mitochondrial matrix. The chain is Cytochrome c oxidase subunit 2 (MT-CO2) from Hapalemur griseus (Gray gentle lemur).